The sequence spans 876 residues: DNA mismatch repair protein MutS (876 aa).

626-633 contacts ATP; the sequence is GPNMGGKS.

The protein belongs to the DNA mismatch repair MutS family.

This protein is involved in the repair of mismatches in DNA. It is possible that it carries out the mismatch recognition step. This protein has a weak ATPase activity. This is DNA mismatch repair protein MutS from Bordetella bronchiseptica (strain ATCC BAA-588 / NCTC 13252 / RB50) (Alcaligenes bronchisepticus).